Here is a 391-residue protein sequence, read N- to C-terminus: Paired box protein Pax-5 (391 aa).

Residues 16-142 (GHGGVNQLGG…SSINRIIRTK (127 aa)) constitute a DNA-binding region (paired). Positions 19-75 (GVNQLGGVFVNGRPLPDVVRQRIVELAHQGVRPCDISRQLRVSHGCVSKILGRYYET) are PAI subdomain. The interval 94–142 (KVVEKIAEYKRQNPTMFAWEIRDRLLAERVCDNDTVPSVSSINRIIRTK) is RED subdomain. Residues 182-218 (SGILGITSPSADTNKRKRDEGIQESPVPNGHSLPGRD) form a disordered region.

As to quaternary structure, interacts with ETS1; this interaction alters PAX5 DNA-binding properties. Binds DNA as a monomer. Interacts with TBP; this interaction allows PAX5 to interact with the basal transcription machinery. Interacts with RB1. Interacts with TLE4. Interacts with DAXX. In terms of processing, O-glycosylated. Phosphorylated by SYK. This phosphorylation plays an important role in the abolition of BLIMP1 repression by PAX5 in order to trigger plasma cell differentiation. As to expression, expressed in all B-lymphoid organs, in the embryonic midbrain and in adult testis.

The protein resides in the nucleus. Transcription factor that plays an essential role in commitment of lymphoid progenitors to the B-lymphocyte lineage. Fulfills a dual role by repressing B-lineage inappropriate genes and simultaneously activating B-lineage-specific genes. In turn, regulates cell adhesion and migration, induces V(H)-to-D(H)J(H) recombination, facilitates pre-B-cell receptor signaling and promotes development to the mature B-cell stage. Repression of the cohesin-release factor WAPL causes global changes of the chromosomal architecture in pro-B cells to facilitate the generation of a diverse antibody repertoire. The chain is Paired box protein Pax-5 (Pax5) from Mus musculus (Mouse).